Reading from the N-terminus, the 246-residue chain is DNA repair protein RecO (246 aa).

Belongs to the RecO family.

Its function is as follows. Involved in DNA repair and RecF pathway recombination. The polypeptide is DNA repair protein RecO (Marinobacter nauticus (strain ATCC 700491 / DSM 11845 / VT8) (Marinobacter aquaeolei)).